A 554-amino-acid chain; its full sequence is Phosphomethylpyrimidine synthase (554 aa).

Substrate-binding positions include Asn188, Met217, Tyr246, His282, 302 to 304 (SRG), 343 to 346 (DGLR), and Glu382. His386 lines the Zn(2+) pocket. Tyr409 is a substrate binding site. His450 contacts Zn(2+). Positions 530, 533, and 538 each coordinate [4Fe-4S] cluster.

The protein belongs to the ThiC family. As to quaternary structure, homodimer. [4Fe-4S] cluster is required as a cofactor.

It carries out the reaction 5-amino-1-(5-phospho-beta-D-ribosyl)imidazole + S-adenosyl-L-methionine = 4-amino-2-methyl-5-(phosphooxymethyl)pyrimidine + CO + 5'-deoxyadenosine + formate + L-methionine + 3 H(+). The protein operates within cofactor biosynthesis; thiamine diphosphate biosynthesis. Functionally, catalyzes the synthesis of the hydroxymethylpyrimidine phosphate (HMP-P) moiety of thiamine from aminoimidazole ribotide (AIR) in a radical S-adenosyl-L-methionine (SAM)-dependent reaction. The polypeptide is Phosphomethylpyrimidine synthase (Coxiella burnetii (strain Dugway 5J108-111)).